The following is a 245-amino-acid chain: Endonuclease III (245 aa).

The region spanning 119-138 is the HhH domain; it reads MDKLVTLPGVGRKTANVILG. Positions 198, 205, 208, and 214 each coordinate [4Fe-4S] cluster.

The protein belongs to the Nth/MutY family. The cofactor is [4Fe-4S] cluster.

It catalyses the reaction 2'-deoxyribonucleotide-(2'-deoxyribose 5'-phosphate)-2'-deoxyribonucleotide-DNA = a 3'-end 2'-deoxyribonucleotide-(2,3-dehydro-2,3-deoxyribose 5'-phosphate)-DNA + a 5'-end 5'-phospho-2'-deoxyribonucleoside-DNA + H(+). DNA repair enzyme that has both DNA N-glycosylase activity and AP-lyase activity. The DNA N-glycosylase activity releases various damaged pyrimidines from DNA by cleaving the N-glycosidic bond, leaving an AP (apurinic/apyrimidinic) site. The AP-lyase activity cleaves the phosphodiester bond 3' to the AP site by a beta-elimination, leaving a 3'-terminal unsaturated sugar and a product with a terminal 5'-phosphate. Has a preference for oxidized pyrimidines, such as thymine glycol (prefers 5S isomers) 5,6-dihydrouracil:G, 5-hydroxyuracil:G, 5-hydroxycytosine:G and urea:A. Cleaves ssDNA containing an AP site. In Mycobacterium tuberculosis (strain ATCC 25618 / H37Rv), this protein is Endonuclease III.